A 510-amino-acid polypeptide reads, in one-letter code: ATP synthase subunit alpha (510 aa).

Residue 169–176 (GDRQTGKT) participates in ATP binding.

It belongs to the ATPase alpha/beta chains family. In terms of assembly, F-type ATPases have 2 components, CF(1) - the catalytic core - and CF(0) - the membrane proton channel. CF(1) has five subunits: alpha(3), beta(3), gamma(1), delta(1), epsilon(1). CF(0) has three main subunits: a(1), b(2) and c(9-12). The alpha and beta chains form an alternating ring which encloses part of the gamma chain. CF(1) is attached to CF(0) by a central stalk formed by the gamma and epsilon chains, while a peripheral stalk is formed by the delta and b chains.

The protein localises to the cell inner membrane. It catalyses the reaction ATP + H2O + 4 H(+)(in) = ADP + phosphate + 5 H(+)(out). Its function is as follows. Produces ATP from ADP in the presence of a proton gradient across the membrane. The alpha chain is a regulatory subunit. This chain is ATP synthase subunit alpha, found in Rickettsia conorii (strain ATCC VR-613 / Malish 7).